A 512-amino-acid chain; its full sequence is ETS translocation variant 3 (512 aa).

The ETS DNA-binding region spans 35–116 (IQLWHFILEL…KGKRFTYKFN (82 aa)). The disordered stretch occupies residues 136-222 (VPQSAPPVPT…NAIGGGGIGH (87 aa)). Phosphoserine is present on residues serine 139, serine 159, and serine 315. Polar residues predominate over residues 158-184 (HSPTNDVQPGRFSASSLTASGQESSNG). Residues 336 to 512 (PEESTQFSIK…QGLATAAADA (177 aa)) are disordered. 3 stretches are compositionally biased toward basic and acidic residues: residues 380–406 (IKVEPASEKDPESLRQSAREKEEHTQE), 453–468 (DRPGKEPSAPEKKEDA), and 479–491 (RWNDDPEARELSK). A Glycyl lysine isopeptide (Lys-Gly) (interchain with G-Cter in SUMO2) cross-link involves residue lysine 381. Lysine 388 is modified (N6-acetyllysine; alternate). Lysine 388 is covalently cross-linked (Glycyl lysine isopeptide (Lys-Gly) (interchain with G-Cter in SUMO2); alternate).

The protein belongs to the ETS family.

It is found in the nucleus. Its function is as follows. Transcriptional repressor that contribute to growth arrest during terminal macrophage differentiation by repressing target genes involved in Ras-dependent proliferation. Represses MMP1 promoter activity. This Homo sapiens (Human) protein is ETS translocation variant 3 (ETV3).